The primary structure comprises 118 residues: Phosphoribosyl-AMP cyclohydrolase (118 aa).

Asp-87 provides a ligand contact to Mg(2+). Cys-88 lines the Zn(2+) pocket. Mg(2+)-binding residues include Asp-89 and Asp-91. Cys-104 and Cys-111 together coordinate Zn(2+).

It belongs to the PRA-CH family. In terms of assembly, homodimer. The cofactor is Mg(2+). Zn(2+) is required as a cofactor.

It localises to the cytoplasm. The enzyme catalyses 1-(5-phospho-beta-D-ribosyl)-5'-AMP + H2O = 1-(5-phospho-beta-D-ribosyl)-5-[(5-phospho-beta-D-ribosylamino)methylideneamino]imidazole-4-carboxamide. It functions in the pathway amino-acid biosynthesis; L-histidine biosynthesis; L-histidine from 5-phospho-alpha-D-ribose 1-diphosphate: step 3/9. In terms of biological role, catalyzes the hydrolysis of the adenine ring of phosphoribosyl-AMP. The protein is Phosphoribosyl-AMP cyclohydrolase of Corynebacterium glutamicum (strain ATCC 13032 / DSM 20300 / JCM 1318 / BCRC 11384 / CCUG 27702 / LMG 3730 / NBRC 12168 / NCIMB 10025 / NRRL B-2784 / 534).